The sequence spans 202 residues: Endothelin-1 (202 aa).

Positions 1–23 (MDYFSMMVSLLLVAFHGAPETAA) are cleaved as a signal peptide. A disordered region spans residues 24-49 (SGTELSTGAENPGEKPPASAPWRPRR). Residues 24 to 50 (SGTELSTGAENPGEKPPASAPWRPRRS) constitute a propeptide that is removed on maturation. 2 disulfides stabilise this stretch: C53–C67 and C55–C63. The propeptide occupies 74-202 (VNTPGHIVPY…EQKVTHNRTH (129 aa)). Residues 110-124 (CQCTSPHDKKCWNFC) are endothelin-like.

It belongs to the endothelin/sarafotoxin family.

The protein localises to the secreted. In terms of biological role, endothelins are endothelium-derived vasoconstrictor peptides. Probable ligand for G-protein coupled receptors EDNRA and EDNRB which activates PTK2B, BCAR1, BCAR3 and, GTPases RAP1 and RHOA cascade in glomerular mesangial cells. Also binds the DEAR/FBXW7-AS1 receptor. Promotes mesenteric arterial wall remodeling via activation of ROCK signaling and subsequent colocalization of NFATC3 with F-actin filaments. NFATC3 then translocates to the nucleus where it subsequently promotes the transcription of the smooth muscle hypertrophy and differentiation marker ACTA2. This Oryctolagus cuniculus (Rabbit) protein is Endothelin-1 (EDN1).